The primary structure comprises 183 residues: Adenine phosphoribosyltransferase (183 aa).

Belongs to the purine/pyrimidine phosphoribosyltransferase family. Homodimer.

It localises to the cytoplasm. The catalysed reaction is AMP + diphosphate = 5-phospho-alpha-D-ribose 1-diphosphate + adenine. Its pathway is purine metabolism; AMP biosynthesis via salvage pathway; AMP from adenine: step 1/1. In terms of biological role, catalyzes a salvage reaction resulting in the formation of AMP, that is energically less costly than de novo synthesis. The protein is Adenine phosphoribosyltransferase of Shewanella sp. (strain ANA-3).